A 512-amino-acid polypeptide reads, in one-letter code: 2-isopropylmalate synthase (512 aa).

In terms of domain architecture, Pyruvate carboxyltransferase spans 5–268; the sequence is LIIFDTTLRD…DVGIDTQHIV (264 aa). Positions 14, 202, 204, and 239 each coordinate Mn(2+). The segment at 394-512 is regulatory domain; the sequence is GFVSLAQHSE…SKAERVAAQG (119 aa).

This sequence belongs to the alpha-IPM synthase/homocitrate synthase family. LeuA type 1 subfamily. In terms of assembly, homodimer. Requires Mn(2+) as cofactor.

The protein resides in the cytoplasm. It catalyses the reaction 3-methyl-2-oxobutanoate + acetyl-CoA + H2O = (2S)-2-isopropylmalate + CoA + H(+). It functions in the pathway amino-acid biosynthesis; L-leucine biosynthesis; L-leucine from 3-methyl-2-oxobutanoate: step 1/4. Functionally, catalyzes the condensation of the acetyl group of acetyl-CoA with 3-methyl-2-oxobutanoate (2-ketoisovalerate) to form 3-carboxy-3-hydroxy-4-methylpentanoate (2-isopropylmalate). The polypeptide is 2-isopropylmalate synthase (Acidovorax ebreus (strain TPSY) (Diaphorobacter sp. (strain TPSY))).